Reading from the N-terminus, the 123-residue chain is Small ribosomal subunit protein uS12 (123 aa).

The segment at 1–47 (MPTINQLVRKGRKKAEKKQSTPALKGGPQKRGVCTRVYTSTPKKPNS) is disordered. Asp89 carries the post-translational modification 3-methylthioaspartic acid.

Belongs to the universal ribosomal protein uS12 family. In terms of assembly, part of the 30S ribosomal subunit. Contacts proteins S8 and S17. May interact with IF1 in the 30S initiation complex.

Functionally, with S4 and S5 plays an important role in translational accuracy. Its function is as follows. Interacts with and stabilizes bases of the 16S rRNA that are involved in tRNA selection in the A site and with the mRNA backbone. Located at the interface of the 30S and 50S subunits, it traverses the body of the 30S subunit contacting proteins on the other side and probably holding the rRNA structure together. The combined cluster of proteins S8, S12 and S17 appears to hold together the shoulder and platform of the 30S subunit. This chain is Small ribosomal subunit protein uS12, found in Desulforapulum autotrophicum (strain ATCC 43914 / DSM 3382 / VKM B-1955 / HRM2) (Desulfobacterium autotrophicum).